Reading from the N-terminus, the 487-residue chain is Zinc finger and BTB domain-containing protein 32 (487 aa).

Residues 29 to 87 (CDTLITVGSQEFPAHSLVLAGVSQQLGRRGQWALGEGISPSTFAQLLNFVYGESVELQP) enclose the BTB domain. Residues 112–166 (ARGDRAKKPDPGLKKHQEEPEKPSRNPERELGDPGEKQKPEQVSRTGGREQEMLH) show a composition bias toward basic and acidic residues. Disordered stretches follow at residues 112–244 (ARGD…TSVT) and 308–371 (QNQL…ARSR). Polar residues predominate over residues 308–320 (QNQLASSSPTPGS). Residues 357 to 369 (PPRPHPPPAPPAR) show a composition bias toward pro residues. C2H2-type zinc fingers lie at residues 373 to 395 (YACS…YRVH), 401 to 423 (FSCS…LRTH), and 428 to 450 (YRCS…MRGH). Residues 468–487 (SSSRPSRPSTSPCCPSSSTT) are disordered.

The protein belongs to the krueppel C2H2-type zinc-finger protein family. Homodimer (via PTB domain). Interacts with the N-terminal of FANCC. Interacts with ZBTB16. Interacts with GATA3. Predominantly expressed in testis. Some isoforms are ubiquitously expressed.

It localises to the nucleus. In terms of biological role, DNA-binding protein that binds to the to a 5'-TGTACAGTGT-3' core sequence. May function as a transcriptional transactivator and transcriptional repressor. Probably exerts its repressor effect by preventing GATA3 from binding to DNA. May play a role in regulating the differentiation and activation of helper T-cells. The polypeptide is Zinc finger and BTB domain-containing protein 32 (ZBTB32) (Homo sapiens (Human)).